The following is a 270-amino-acid chain: Acetyl-coenzyme A carboxylase carboxyl transferase subunit beta (270 aa).

One can recognise a CoA carboxyltransferase N-terminal domain in the interval 16-270 (LFAKCPACKH…KLLAFHGGSK (255 aa)). Zn(2+) is bound by residues cysteine 20, cysteine 23, cysteine 38, and cysteine 41. The segment at 20–41 (CPACKHMIYQKDLGLEKICPKC) adopts a C4-type zinc-finger fold.

It belongs to the AccD/PCCB family. In terms of assembly, acetyl-CoA carboxylase is a heterohexamer composed of biotin carboxyl carrier protein (AccB), biotin carboxylase (AccC) and two subunits each of ACCase subunit alpha (AccA) and ACCase subunit beta (AccD). Zn(2+) is required as a cofactor.

The protein resides in the cytoplasm. The enzyme catalyses N(6)-carboxybiotinyl-L-lysyl-[protein] + acetyl-CoA = N(6)-biotinyl-L-lysyl-[protein] + malonyl-CoA. The protein operates within lipid metabolism; malonyl-CoA biosynthesis; malonyl-CoA from acetyl-CoA: step 1/1. Functionally, component of the acetyl coenzyme A carboxylase (ACC) complex. Biotin carboxylase (BC) catalyzes the carboxylation of biotin on its carrier protein (BCCP) and then the CO(2) group is transferred by the transcarboxylase to acetyl-CoA to form malonyl-CoA. This is Acetyl-coenzyme A carboxylase carboxyl transferase subunit beta from Streptococcus mutans serotype c (strain NN2025).